A 190-amino-acid polypeptide reads, in one-letter code: dITP/XTP pyrophosphatase (190 aa).

7 to 12 (SNNKNK) contacts substrate. The active-site Proton acceptor is the Asp68. Mg(2+) is bound at residue Asp68. Residues Thr69, 148–151 (FGYD), Lys171, and 176–177 (HR) each bind substrate.

Belongs to the HAM1 NTPase family. As to quaternary structure, homodimer. Mg(2+) serves as cofactor.

It catalyses the reaction XTP + H2O = XMP + diphosphate + H(+). The enzyme catalyses dITP + H2O = dIMP + diphosphate + H(+). The catalysed reaction is ITP + H2O = IMP + diphosphate + H(+). Pyrophosphatase that catalyzes the hydrolysis of nucleoside triphosphates to their monophosphate derivatives, with a high preference for the non-canonical purine nucleotides XTP (xanthosine triphosphate), dITP (deoxyinosine triphosphate) and ITP. Seems to function as a house-cleaning enzyme that removes non-canonical purine nucleotides from the nucleotide pool, thus preventing their incorporation into DNA/RNA and avoiding chromosomal lesions. This is dITP/XTP pyrophosphatase from Flavobacterium psychrophilum (strain ATCC 49511 / DSM 21280 / CIP 103535 / JIP02/86).